Here is a 40-residue protein sequence, read N- to C-terminus: SDGRNTAANDKASDLMALRDGCCPNPSCSVNNPDICGGGR.

A propeptide spanning residues 1–19 (SDGRNTAANDKASDLMALR) is cleaved from the precursor. Cystine bridges form between C22–C28 and C23–C36. The interval 24-26 (PNP) is lacks the Ser-Xaa-Pro motif that is crucial for potent interaction with nAChR. C36 is modified (cysteine amide). Positions 37–40 (GGGR) are excised as a propeptide.

This sequence belongs to the conotoxin A superfamily. In terms of tissue distribution, expressed by the venom duct.

The protein resides in the secreted. Alpha-conotoxins act on postsynaptic membranes, they bind to the nicotinic acetylcholine receptors (nAChR) and thus inhibit them. Has possibly a distinct nAChR binding mode from other alpha-conotoxins, due to a different three residue motif (lacks the Ser-Xaa-Pro motif). This is Alpha-conotoxin-like Qc1.4b from Conus quercinus (Oak cone).